Here is a 329-residue protein sequence, read N- to C-terminus: 4-diphosphocytidyl-2-C-methyl-D-erythritol kinase (329 aa).

The active site involves K14. 117-127 contacts ATP; sequence PSGAGMGGASS. D166 is an active-site residue.

The protein belongs to the GHMP kinase family. IspE subfamily.

It carries out the reaction 4-CDP-2-C-methyl-D-erythritol + ATP = 4-CDP-2-C-methyl-D-erythritol 2-phosphate + ADP + H(+). The protein operates within isoprenoid biosynthesis; isopentenyl diphosphate biosynthesis via DXP pathway; isopentenyl diphosphate from 1-deoxy-D-xylulose 5-phosphate: step 3/6. Its function is as follows. Catalyzes the phosphorylation of the position 2 hydroxy group of 4-diphosphocytidyl-2C-methyl-D-erythritol. The chain is 4-diphosphocytidyl-2-C-methyl-D-erythritol kinase from Rhodopirellula baltica (strain DSM 10527 / NCIMB 13988 / SH1).